The chain runs to 862 residues: Autotaxin (862 aa).

Positions 1-27 (MARQGCFGSYQVISLFTFAIGVNLCLG) are cleaved as a signal peptide. Positions 28–35 (FTASRIKR) are cleaved as a propeptide — removed by furin. An N-linked (GlcNAc...) asparagine glycan is attached at Asn-53. SMB domains lie at 54–97 (TSGS…LKTA) and 98–142 (RGWE…GESH). Cystine bridges form between Cys-58-Cys-75, Cys-62-Cys-93, Cys-73-Cys-86, Cys-79-Cys-85, Cys-102-Cys-119, Cys-107-Cys-137, Cys-117-Cys-130, Cys-123-Cys-129, Cys-148-Cys-194, and Cys-156-Cys-350. The Cell attachment site signature appears at 126–128 (RGD). Positions 144 to 501 (VDDDCEEIRV…PTFKYRTKVP (358 aa)) are phosphodiesterase domain. 2 residues coordinate Zn(2+): Asp-171 and Thr-209. Residue Thr-209 is the Nucleophile of the active site. 3 residues coordinate 1-(9Z-octadecenoyl)-sn-glycero-3-phosphate: Thr-209, Asn-230, and Asp-311. Residues Thr-209, Asn-230, and Asp-311 each coordinate 1-hexadecanoyl-sn-glycero-3-phosphate. The 1-tetradecanoyl-sn-glycerol 3-phosphate site is built by Thr-209, Asn-230, and Asp-311. 4 residues coordinate Zn(2+): Asp-311, His-315, Asp-358, and His-359. Disulfide bonds link Cys-366/Cys-468, Cys-413/Cys-805, Cys-566/Cys-666, Cys-568/Cys-651, and Cys-774/Cys-784. An N-linked (GlcNAc...) asparagine glycan is attached at Asn-410. His-474 contacts Zn(2+). Position 474 (His-474) interacts with 1-(9Z-octadecenoyl)-sn-glycero-3-phosphate. 1-hexadecanoyl-sn-glycero-3-phosphate is bound at residue His-474. His-474 lines the 1-tetradecanoyl-sn-glycerol 3-phosphate pocket. Asn-524 carries an N-linked (GlcNAc...) asparagine glycan. Residues 597 to 862 (LYGRPAVLYR…TYLHTYESEI (266 aa)) are nuclease-like domain. The Ca(2+) site is built by Asp-739, Asn-741, Asn-743, Leu-745, and Asp-747. A glycan (N-linked (GlcNAc...) asparagine) is linked at Asn-806. Positions 829–850 (IEHLTGLDFYRKTSRSYSEILT) are required for secretion.

It belongs to the nucleotide pyrophosphatase/phosphodiesterase family. Zn(2+) is required as a cofactor. Requires Ca(2+) as cofactor. N-glycosylation, but not furin-cleavage, plays a critical role on secretion and on lysoPLD activity. Secretion requires simultaneous glycosylation on Asn-53 and Asn-410, while probable glycosylation of Asn-410 has a preferential role on lysoPLD activity. Not O-glycosylated. In terms of processing, the interdomain disulfide bond between Cys-413 and Cys-805 is essential for catalytic activity. As to expression, expressed in brain and adipose tissue.

It localises to the secreted. It carries out the reaction a 1-O-alkyl-sn-glycero-3-phosphoethanolamine + H2O = a 1-O-alkyl-sn-glycero-3-phosphate + ethanolamine + H(+). The enzyme catalyses a 1-acyl-sn-glycero-3-phosphoethanolamine + H2O = a 1-acyl-sn-glycero-3-phosphate + ethanolamine + H(+). It catalyses the reaction 1-(9Z-octadecenoyl)-sn-glycero-3-phosphoethanolamine + H2O = 1-(9Z-octadecenoyl)-sn-glycero-3-phosphate + ethanolamine + H(+). The catalysed reaction is a 1-O-alkyl-sn-glycero-3-phosphocholine + H2O = a 1-O-alkyl-sn-glycero-3-phosphate + choline + H(+). It carries out the reaction 1-O-(9Z-octadecenyl)-sn-glycero-3-phosphocholine + H2O = 1-O-(9Z-octadecenyl)-sn-glycero-3-phosphate + choline + H(+). The enzyme catalyses 1-O-hexadecyl-sn-glycero-3-phosphocholine + H2O = 1-O-hexadecyl-sn-glycero-3-phosphate + choline + H(+). It catalyses the reaction a 1-O-(1Z-alkenyl)-sn-glycero-3-phosphocholine + H2O = a 1-O-(1Z-alkenyl)-sn-glycero-3-phosphate + choline + H(+). The catalysed reaction is a 1-acyl-sn-glycero-3-phosphocholine + H2O = a 1-acyl-sn-glycero-3-phosphate + choline + H(+). It carries out the reaction 1-dodecanoyl-sn-glycero-3-phosphocholine + H2O = 1-dodecanoyl-sn-glycerol 3-phosphate + choline + H(+). The enzyme catalyses 1-(9Z-octadecenoyl)-sn-glycero-3-phosphocholine + H2O = 1-(9Z-octadecenoyl)-sn-glycero-3-phosphate + choline + H(+). It catalyses the reaction 1-tetradecanoyl-sn-glycero-3-phosphocholine + H2O = 1-tetradecanoyl-sn-glycerol 3-phosphate + choline + H(+). The catalysed reaction is 1-decanoyl-sn-glycero-3-phosphocholine + H2O = 1-decanoyl-sn-glycero-3-phosphate + choline + H(+). It carries out the reaction 1-octadecanoyl-sn-glycero-3-phosphocholine + H2O = 1-octadecanoyl-sn-glycero-3-phosphate + choline + H(+). The enzyme catalyses 1-hexadecanoyl-sn-glycero-3-phosphocholine + H2O = 1-hexadecanoyl-sn-glycero-3-phosphate + choline + H(+). It catalyses the reaction 1-hexanoyl-sn-glycero-3-phosphocholine + H2O = 1-hexanoyl-sn-glycero-3-phosphate + choline + H(+). The catalysed reaction is 1-(9Z,12Z)-octadecadienoyl-sn-glycero-3-phosphocholine + H2O = 1-(9Z,12Z)-octadecadienoyl-sn-glycero-3-phosphate + choline + H(+). It carries out the reaction sphing-4-enine-phosphocholine + H2O = sphing-4-enine 1-phosphate + choline + H(+). The enzyme catalyses 1-(5Z,8Z,11Z,14Z-eicosatetraenoyl)-sn-glycero-3-phosphocholine + H2O = 1-(5Z,8Z,11Z,14Z-eicosatetraenoyl)-sn-glycero-3-phosphate + choline + H(+). It catalyses the reaction a 2-acyl-sn-glycero-3-phosphocholine + H2O = a 2-acyl-sn-glycerol 3-phosphate + choline + H(+). The catalysed reaction is a 1,2-diacyl-sn-glycero-3-phosphocholine + H2O = a 1,2-diacyl-sn-glycero-3-phosphate + choline + H(+). It carries out the reaction 1,2-dioctanoyl-sn-glycero-3-phosphocholine + H2O = 1,2-dioctanoyl-sn-glycero-3-phosphate + choline + H(+). The enzyme catalyses 1,2-didecanoyl-sn-glycero-3-phosphocholine + H2O = 1,2-didecanoyl-sn-glycero-3-phosphate + choline + H(+). It catalyses the reaction a 1-acyl-sn-glycero-3-phospho-L-serine + H2O = a 1-acyl-sn-glycero-3-phosphate + L-serine + H(+). The catalysed reaction is 1-(9Z-octadecenoyl)-sn-glycero-3-phospho-L-serine + H2O = 1-(9Z-octadecenoyl)-sn-glycero-3-phosphate + L-serine + H(+). It carries out the reaction a 2-acyl-sn-glycero-3-phospho-L-serine + H2O = a 2-acyl-sn-glycerol 3-phosphate + L-serine + H(+). Inhibited by EDTA and EGTA. Functionally, secreted lysophospholipase D that hydrolyzes lysophospholipids to produce the signaling molecule lysophosphatidic acid (LPA) in extracellular fluids. Its major substrate is lysophosphatidylcholine. Can also act on sphingosylphosphorylcholine producing sphingosine-1-phosphate, a modulator of cell motility. Can hydrolyze, in vitro, bis-pNPP, to some extent pNP-TMP, and barely ATP. Involved in several motility-related processes such as angiogenesis and neurite outgrowth. Acts as an angiogenic factor by stimulating migration of smooth muscle cells and microtubule formation. Stimulates migration of melanoma cells, probably via a pertussis toxin-sensitive G protein. May have a role in induction of parturition. Possible involvement in cell proliferation and adipose tissue development. Required for LPA production in activated platelets, cleaves the sn-1 lysophospholipids to generate sn-1 lysophosphatidic acids containing predominantly 18:2 and 20:4 fatty acids. Shows a preference for the sn-1 to the sn-2 isomer of 1-O-alkyl-sn-glycero-3-phosphocholine (lyso-PAF). The protein is Autotaxin of Mus musculus (Mouse).